The sequence spans 412 residues: Potassium channel, subfamily K, member 13 (412 aa).

The Cytoplasmic segment spans residues 1-21 (MACRSGCCCNSIGSFNEDNAR). Residues 22–42 (FLMLALLIIIYLLCGAAVFSA) traverse the membrane as a helical segment. The pore-forming intramembrane region spans 97–117 (WDFAGAFYFVGTVVSTIGFGM). Positions 112, 113, and 114 each coordinate K(+). A selectivity filter 1 region spans residues 112–117 (TIGFGM). The helical transmembrane segment at 127–147 (IFLIFYGLIGCAATILFFNLF) threads the bilayer. At 148–198 (LERVITVIAFVLKFCHERRESRKAGPTQNCRRPSTDNRDRRTDSLAGWKPS) the chain is on the cytoplasmic side. Residues 199–219 (VYCVMLILGVAAILVSCCASA) traverse the membrane as a helical segment. The pore-forming intramembrane region spans 229–249 (YLDALYFCFVAFSTIGFGDMV). 4 residues coordinate K(+): threonine 242, isoleucine 243, glycine 244, and phenylalanine 245. Positions 242 to 247 (TIGFGD) are selectivity filter 2. Residues 268–288 (LFILTGVCCIYSLFNVISIVI) form a helical membrane-spanning segment. Topologically, residues 289 to 412 (KQVLNWLLRR…NRLAETSVDR (124 aa)) are cytoplasmic. Residues 374–386 (MANGHPRQSGSSS) are compositionally biased toward polar residues. Residues 374-395 (MANGHPRQSGSSSRHNEFSGGV) are disordered.

Belongs to the two pore domain potassium channel (TC 1.A.1.8) family. Homodimer. Heterodimer. In terms of tissue distribution, brain and heart.

Its subcellular location is the cell membrane. The catalysed reaction is K(+)(in) = K(+)(out). The channel conductance is activated by arachidonic acid and inhibited by Ba(2+) ions, volatile anesthetics such as halothane and antiarrhythmic drug mexiletine. Insensitive to extracellular pH change. Functionally, k(+) channel that conducts outward rectifying tonic currents potentiated by purinergic signals. Homo- and heterodimerizes to form functional channels with distinct regulatory and gating properties. Contributes most of K(+) currents at the plasma membrane of resting microglia. Maintains a depolarized membrane potential required for proper ramified microglia morphology and phagocytosis, selectively mediating microglial pruning of presynaptic compartments at hippocampal excitatory synapses. Upon local release of ATP caused by neuronal injury or infection, it is potentiated by purinergic signaling and contributes to ATP-triggered K(+) efflux underlying microglial NLRP3 inflammasome assembly and IL1B release. The sequence is that of Potassium channel, subfamily K, member 13 from Danio rerio (Zebrafish).